The sequence spans 402 residues: Probable peptidoglycan glycosyltransferase FtsW (402 aa).

Topologically, residues 1–24 are cytoplasmic; that stretch reads MLYRLKLLLSGQNTKKERVRAKLE. The chain crosses the membrane as a helical span at residues 25-45; sequence IDISIVFVMLGLLIFGWVMVT. The Periplasmic segment spans residues 46-63; the sequence is SASMVVALDDYNNPYFYS. A helical membrane pass occupies residues 64 to 84; the sequence is IRQGFFAVIAIFLFLLALLVP. At 85 to 91 the chain is on the cytoplasmic side; it reads TKNYEKN. Residues 92 to 112 form a helical membrane-spanning segment; that stretch reads YNAFFFIMLIVLVAVLVPGVG. Residues 113-121 lie on the Periplasmic side of the membrane; that stretch reads KSVNGARRW. A helical transmembrane segment spans residues 122–142; the sequence is IPLIIINIQVAELAKLLAIIF. Residues 143 to 160 are Cytoplasmic-facing; that stretch reads FSGYIAENLPKMTNFKEG. 2 helical membrane-spanning segments follow: residues 161–181 and 182–202; these read ILTPITLLGCIAVLLLMQPDF and GSTVVISICVMGMLFVSGNKV. Residue Arg203 is a topological domain, cytoplasmic. Residues 204–224 traverse the membrane as a helical segment; the sequence is WYGLLIGAMLIMATMLVIISP. The Periplasmic segment spans residues 225–284; it reads YRMHRITGFLHPWENANGSGYQLVQALIGFGRGGWFGDGLGNGVQKQFFLPEAHTDFITS. The chain crosses the membrane as a helical span at residues 285-305; the sequence is VIAEEIGVIGLMILLMVYLFI. The Cytoplasmic portion of the chain corresponds to 306–324; the sequence is VFRAMNIAKMAFELKRYYQ. The helical transmembrane segment at 325–345 threads the bilayer; sequence AFLSYGISFWIGFQVFVNIGV. The Periplasmic segment spans residues 346–357; sequence NTGLLPTKGLTL. A helical transmembrane segment spans residues 358-378; sequence PLISYGGSSLLIMCFTLGILV. The Cytoplasmic segment spans residues 379 to 402; it reads RVDFENKLLADTINPKYIYKKVRK.

This sequence belongs to the SEDS family. FtsW subfamily.

The protein resides in the cell inner membrane. It carries out the reaction [GlcNAc-(1-&gt;4)-Mur2Ac(oyl-L-Ala-gamma-D-Glu-L-Lys-D-Ala-D-Ala)](n)-di-trans,octa-cis-undecaprenyl diphosphate + beta-D-GlcNAc-(1-&gt;4)-Mur2Ac(oyl-L-Ala-gamma-D-Glu-L-Lys-D-Ala-D-Ala)-di-trans,octa-cis-undecaprenyl diphosphate = [GlcNAc-(1-&gt;4)-Mur2Ac(oyl-L-Ala-gamma-D-Glu-L-Lys-D-Ala-D-Ala)](n+1)-di-trans,octa-cis-undecaprenyl diphosphate + di-trans,octa-cis-undecaprenyl diphosphate + H(+). It participates in cell wall biogenesis; peptidoglycan biosynthesis. Functionally, peptidoglycan polymerase that is essential for cell division. This chain is Probable peptidoglycan glycosyltransferase FtsW, found in Francisella salina.